The primary structure comprises 127 residues: Ribosome-binding factor A (127 aa).

It belongs to the RbfA family. In terms of assembly, monomer. Binds 30S ribosomal subunits, but not 50S ribosomal subunits or 70S ribosomes.

The protein localises to the cytoplasm. In terms of biological role, one of several proteins that assist in the late maturation steps of the functional core of the 30S ribosomal subunit. Associates with free 30S ribosomal subunits (but not with 30S subunits that are part of 70S ribosomes or polysomes). Required for efficient processing of 16S rRNA. May interact with the 5'-terminal helix region of 16S rRNA. The sequence is that of Ribosome-binding factor A from Rickettsia typhi (strain ATCC VR-144 / Wilmington).